Reading from the N-terminus, the 249-residue chain is Probable hydroxyacylglutathione hydrolase ECU02_0580 (249 aa).

Zn(2+)-binding residues include His-75, His-77, Asp-79, His-80, His-126, Asp-144, and His-183. Substrate is bound by residues 183-185 (HDY) and 240-243 (RERK).

This sequence belongs to the metallo-beta-lactamase superfamily. Glyoxalase II family. The cofactor is Zn(2+).

It is found in the cytoplasm. Its subcellular location is the nucleus. The catalysed reaction is an S-(2-hydroxyacyl)glutathione + H2O = a 2-hydroxy carboxylate + glutathione + H(+). It participates in secondary metabolite metabolism; methylglyoxal degradation; (R)-lactate from methylglyoxal: step 2/2. Its function is as follows. Thiolesterase that catalyzes the hydrolysis of S-D-lactoyl-glutathione to form glutathione and D-lactic acid. The chain is Probable hydroxyacylglutathione hydrolase ECU02_0580 from Encephalitozoon cuniculi (strain GB-M1) (Microsporidian parasite).